The primary structure comprises 228 residues: Mediator of RNA polymerase II transcription subunit 7-A (228 aa).

This sequence belongs to the Mediator complex subunit 7 family. As to quaternary structure, component of the Mediator complex.

The protein resides in the nucleus. Its function is as follows. Component of the Mediator complex, a coactivator involved in the regulated transcription of nearly all RNA polymerase II-dependent genes. Mediator functions as a bridge to convey information from gene-specific regulatory proteins to the basal RNA polymerase II transcription machinery. Mediator is recruited to promoters by direct interactions with regulatory proteins and serves as a scaffold for the assembly of a functional preinitiation complex with RNA polymerase II and the general transcription factors. This Xenopus laevis (African clawed frog) protein is Mediator of RNA polymerase II transcription subunit 7-A (med7-a).